A 139-amino-acid polypeptide reads, in one-letter code: MGCNSLSMIKVRLQNLFDNDEVALLKITCYTDKLILLTNALAKAVIHTIKLNGIVFIHVITSSEVCPDNNIVVKSNFTTMPILQNGGYIWELIELTHCSQSNGLMVDNCEIKFSKRLSDSVMTNYMNQISDLLGLDLNS.

Positions 136–139 (DLNS) match the DLNP; interaction with MAP1B motif.

This sequence belongs to the pneumovirus non-structural protein 1 family. In terms of assembly, monomer. Homomultimer. Heteromultimer with NS2. Interacts with the matrix protein M. Interacts with host ELOC and CUL2; this interaction allows NS1 to form an active E3 ligase with ELOC and CUL2. Interacts with host IRF3; this interaction leads to the disrupted association of IRF3 with CREBBP and thus reduced binding of IRF3 to the IFN-beta promoter. Interacts with host MAVS; this interaction prevents MAVS binding to RIGI and inhibits signaling pathway leading to interferon production. Interacts with host MAP1B/microtubule-associated protein 1B. Interacts with host TRIM25 (via SPRY domain); this interaction suppresses RIGI ubiquitination and results in decreased interaction between RIGI and MAVS.

It is found in the host cytoplasm. The protein localises to the host mitochondrion. It localises to the host nucleus. Its function is as follows. Plays a major role in antagonizing the type I IFN-mediated antiviral response by degrading or inhibiting multiple cellular factors required for either IFN induction or response pathways. Acts cooperatively with NS2 to repress activation and nuclear translocation of host IFN-regulatory factor IRF3. Also disrupts the association of IRF3 with CREBBP. Interacts with host mitochondrial-associated membrane (MAM) MAVS and prevents the interaction with RIGI. Interacts with TRIM25 to suppress TRIM25-mediated RIGI ubiquitination and thereby RIGI-MAVS interaction. Together with NS2, participates in the proteasomal degradation of host STAT2, IRF3, IRF7, TBK1 and RIGI through a NS-degradasome involving CUL2 and Elongin-C. The degradasome requires an intact mitochondrial MAVS. Decreases the levels of host TRAF3 and IKBKE/IKK-epsilon. As functions other than disruptions of the type I IFN-mediated antiviral signaling pathways, induces host SOCS1 and SOCS3 expression. Suppresses premature apoptosis by an NF-kappa-B-dependent, interferon-independent mechanism and thus facilitates virus growth. Additionally, NS1 may serve some inhibitory role in viral transcription and RNA replication. Suppresses proliferation and activation of host CD103+ CD8+ cytotoxic T-lymphocytes and Th17 helper T-lymphocytes. This Human respiratory syncytial virus B (strain 18537) protein is Non-structural protein 1 (1C).